The chain runs to 380 residues: Epoxyqueuosine reductase (380 aa).

Asp-134 functions as the Proton donor in the catalytic mechanism. One can recognise a 4Fe-4S ferredoxin-type 1 domain in the interval 179–208; the sequence is PPDQPIEDQCGSCTKCIDICPTGALIQGGQ. 8 residues coordinate [4Fe-4S] cluster: Cys-188, Cys-191, Cys-194, Cys-198, Cys-214, Cys-240, Cys-243, and Cys-247. The 4Fe-4S ferredoxin-type 2 domain maps to 226 to 258; it reads PEEYRDKIGNRIYGCDTCQTVCPKNKGMDFHNH.

This sequence belongs to the QueG family. As to quaternary structure, monomer. Cob(II)alamin serves as cofactor. Requires [4Fe-4S] cluster as cofactor.

Its subcellular location is the cytoplasm. It carries out the reaction epoxyqueuosine(34) in tRNA + AH2 = queuosine(34) in tRNA + A + H2O. The protein operates within tRNA modification; tRNA-queuosine biosynthesis. Functionally, catalyzes the conversion of epoxyqueuosine (oQ) to queuosine (Q), which is a hypermodified base found in the wobble positions of tRNA(Asp), tRNA(Asn), tRNA(His) and tRNA(Tyr). The chain is Epoxyqueuosine reductase from Bacillus anthracis.